Here is a 199-residue protein sequence, read N- to C-terminus: Photosystem I reaction center subunit XI (199 aa).

The next 2 helical transmembrane spans lie at 108-128 and 165-185; these read LTAGLLAAIGAVHILTALLVL and FWLGGCGGSVFAWLLVGTLHL.

Belongs to the PsaL family.

Its subcellular location is the cellular thylakoid membrane. The sequence is that of Photosystem I reaction center subunit XI from Prochlorococcus marinus (strain AS9601).